Here is a 350-residue protein sequence, read N- to C-terminus: WD repeat-containing protein DWA2 (350 aa).

6 WD repeats span residues 39-79, 118-158, 166-205, 206-246, 250-290, and 311-350; these read KEEN…FDQR, AHVG…KSAE, GMRHSLSGGAWNPHDVNSVAATSESSIQFWDLRTMKKNNS, IERA…FPVQ, GHTH…EHKT, and DYEDSVYGLAWSSREPWIFASLSYDGRVVIESVKPFLPRR.

Interacts with ABI5 and DDB1A and DWA1.

It is found in the nucleus. The protein operates within protein modification; protein ubiquitination. In terms of biological role, component of the CUL4-RBX1-DDB1-DWA1/DWA2 E3 ubiquitin-protein ligase complex that acts as a negative regulator in abscisic acid (ABA) signaling. May function as the substrate recognition module within this complex leading to ABI5 degradation. Functionally redundant with DWA1. The chain is WD repeat-containing protein DWA2 (DWA2) from Arabidopsis thaliana (Mouse-ear cress).